The chain runs to 257 residues: 2,3,4,5-tetrahydropyridine-2,6-dicarboxylate N-acetyltransferase (257 aa).

It belongs to the transferase hexapeptide repeat family. DapH subfamily.

The enzyme catalyses (S)-2,3,4,5-tetrahydrodipicolinate + acetyl-CoA + H2O = L-2-acetamido-6-oxoheptanedioate + CoA. The protein operates within amino-acid biosynthesis; L-lysine biosynthesis via DAP pathway; LL-2,6-diaminopimelate from (S)-tetrahydrodipicolinate (acetylase route): step 1/3. Catalyzes the transfer of an acetyl group from acetyl-CoA to tetrahydrodipicolinate. This Lactococcus lactis subsp. cremoris (strain SK11) protein is 2,3,4,5-tetrahydropyridine-2,6-dicarboxylate N-acetyltransferase.